We begin with the raw amino-acid sequence, 349 residues long: Aspartate-semialdehyde dehydrogenase (349 aa).

Residues 12–15 (TGSV) and 39–40 (NS) each bind NADP(+). Phosphate is bound at residue R113. C148 acts as the Acyl-thioester intermediate in catalysis. Residue Q175 coordinates substrate. Residue 178–179 (SG) coordinates NADP(+). Substrate is bound at residue E201. K204 lines the phosphate pocket. A substrate-binding site is contributed by R234. H241 functions as the Proton acceptor in the catalytic mechanism. 326–327 (NT) contacts NADP(+).

This sequence belongs to the aspartate-semialdehyde dehydrogenase family. As to quaternary structure, homodimer.

The enzyme catalyses L-aspartate 4-semialdehyde + phosphate + NADP(+) = 4-phospho-L-aspartate + NADPH + H(+). The protein operates within amino-acid biosynthesis; L-lysine biosynthesis via DAP pathway; (S)-tetrahydrodipicolinate from L-aspartate: step 2/4. It participates in amino-acid biosynthesis; L-methionine biosynthesis via de novo pathway; L-homoserine from L-aspartate: step 2/3. It functions in the pathway amino-acid biosynthesis; L-threonine biosynthesis; L-threonine from L-aspartate: step 2/5. Its function is as follows. Catalyzes the NADPH-dependent formation of L-aspartate-semialdehyde (L-ASA) by the reductive dephosphorylation of L-aspartyl-4-phosphate. The chain is Aspartate-semialdehyde dehydrogenase from Leptospira interrogans serogroup Icterohaemorrhagiae serovar copenhageni (strain Fiocruz L1-130).